The following is a 345-amino-acid chain: Phosphoribosylformylglycinamidine cyclo-ligase (345 aa).

Belongs to the AIR synthase family.

The protein localises to the cytoplasm. It carries out the reaction 2-formamido-N(1)-(5-O-phospho-beta-D-ribosyl)acetamidine + ATP = 5-amino-1-(5-phospho-beta-D-ribosyl)imidazole + ADP + phosphate + H(+). The protein operates within purine metabolism; IMP biosynthesis via de novo pathway; 5-amino-1-(5-phospho-D-ribosyl)imidazole from N(2)-formyl-N(1)-(5-phospho-D-ribosyl)glycinamide: step 2/2. The protein is Phosphoribosylformylglycinamidine cyclo-ligase of Pectobacterium atrosepticum (strain SCRI 1043 / ATCC BAA-672) (Erwinia carotovora subsp. atroseptica).